The chain runs to 388 residues: Zinc finger protein 1 (388 aa).

Residues 1–19 show a composition bias toward polar residues; that stretch reads MSSIPNINWNDPNNGKSNT. 3 disordered regions span residues 1-120, 157-219, and 236-311; these read MSSI…QQPL, LQQR…QQWD, and SSIQ…KPIT. Positions 20 to 38 are enriched in low complexity; the sequence is SRQSQPQPQLPSNVSPPNS. 2 stretches are compositionally biased toward polar residues: residues 52–67 and 88–97; these read YGSS…NPNT and YPVQQTAQQR. 2 stretches are compositionally biased toward low complexity: residues 102 to 120 and 157 to 172; these read LQQV…QQPL and LQQR…KSQL. The segment covering 173–203 has biased composition (polar residues); it reads NEQNAMMSASTQQYPVQDFTNPYPNAQNPAE. Composition is skewed to low complexity over residues 204 to 217 and 236 to 259; these read QQQQ…QSQQ and SSIQ…KQQQ. Residues 268 to 278 show a composition bias toward basic residues; the sequence is KKKPGRKPKLR. Residues 282–294 are compositionally biased toward polar residues; the sequence is ESSSETPQVPKTA. The segment at residues 318–345 is a DNA-binding region (zn(2)-C6 fungal-type); that stretch reads CLTCRQRKKRCCETRPRCTECTRLRLNC. A disordered region spans residues 348–367; the sequence is PKPGTEHKNKPKDQKDDENT. Basic and acidic residues predominate over residues 351–367; that stretch reads GTEHKNKPKDQKDDENT.

The protein resides in the nucleus. Its function is as follows. Perhaps a regulatory role. May be involved in transcriptional activation. The protein is Zinc finger protein 1 (CZF1) of Candida albicans (strain WO-1) (Yeast).